The primary structure comprises 64 residues: Large ribosomal subunit protein bL35 (64 aa).

It belongs to the bacterial ribosomal protein bL35 family.

This chain is Large ribosomal subunit protein bL35, found in Shewanella oneidensis (strain ATCC 700550 / JCM 31522 / CIP 106686 / LMG 19005 / NCIMB 14063 / MR-1).